We begin with the raw amino-acid sequence, 448 residues long: MQGTKNNIYTVSRLNGEVRQILEGQLGKIWLNGEISNFSSPSSGHWYLTLKDHSSQIRCAMFKGRNQTVSFKPINGQQVLVKGAISVYEPRGDYQLLIESMLPAGDGLLAQQFDALKMKLAAEGLFAADTKRPLPKNIQRIGVITSPTGAAIRDVLHVLARRDPSIEVIIYPTQVQGETAAQSICQAINIANQRLEVDVLLLTRGGGSLEDLWCFNSEALAHTIYNSALPVVSAVGHEVDTTISDYVADIRAPTPSAGAELLSQDSDNKAQKLATALSRLQQSAKHYQLKQERRLSLLEHRLQRQDPKRTLQQFEQRFDEMQLRLESALSNRLHILSRRQQLLASRLEQQSPKHKLAIEGNRLSYLASRLQDALQDKLSQSEQRIKYAAHQLETVSPLATLSRGYSITTDIHNQVVDSTDKLTIGDSLQTRLRHGQVISTVTQIKPLE.

This sequence belongs to the XseA family. As to quaternary structure, heterooligomer composed of large and small subunits.

It localises to the cytoplasm. The catalysed reaction is Exonucleolytic cleavage in either 5'- to 3'- or 3'- to 5'-direction to yield nucleoside 5'-phosphates.. Bidirectionally degrades single-stranded DNA into large acid-insoluble oligonucleotides, which are then degraded further into small acid-soluble oligonucleotides. The sequence is that of Exodeoxyribonuclease 7 large subunit from Shewanella baltica (strain OS185).